Here is a 261-residue protein sequence, read N- to C-terminus: Chloroplastic import inner membrane translocase subunit HP30-1 (261 aa).

Helical transmembrane passes span 59–77, 113–129, 139–155, and 163–180; these read AAVV…GGLM, NFAA…SVMK, SAVV…SLVS, and MNAI…GVFF.

This sequence belongs to the Tim17/Tim22/Tim23 family. Probable component of a protein-conducting channel made of HP30-1, HP30-2 and HP20 that mediates the import of transit sequence-less proteins into the chloroplastic inner membrane. Interacts with CEQORH.

Its subcellular location is the plastid. It is found in the chloroplast inner membrane. In terms of biological role, together with HP30-2 and HP20, triggers the import and insertion of transit sequence-less multi-pass transmembrane proteins (e.g. CEQORH) into the chloroplastic inner membrane. The chain is Chloroplastic import inner membrane translocase subunit HP30-1 from Arabidopsis thaliana (Mouse-ear cress).